A 383-amino-acid chain; its full sequence is MLDTNKVYEISNHANGLYAATYLSLDDSGVSLMNKNDDDIDDYNLKWFLFPIDDDQYIITSYAANNCKVWNVNNDKINVSTYSSTNSIQKWQIKANGSSYVIQSDNGKVLTAGTGQALGLIRLTDESSNNPNQQWNLTSVQTIQLPQKPIIDTKLKDYPKYSPTGNIDNGTSPQLMGWTLVPCIMVNDPNIDKNTQIKTTPYYILKKYQYWQRAVGSNVALRPHEKKSYTYEWGTEIDQKTTIINTLGFQINIDSGMKFDIPEVGGGTDEIKTQLNEELKIEYSHETKIMEKYQEQSEIDNPTDQSMNSIGFLTITSLELYRYNGSEIRIMQIQTSDNDTYNVTSYPNHQQALLLLTNHSYEEVEEITNIPKSTLKKLKKYYF.

Residues 26–138 enclose the Ricin B-type lectin domain; it reads DDSGVSLMNK…NNPNQQWNLT (113 aa).

This sequence belongs to the toxin_10 family. Monomer in solution. Copurifies from parasporal inclusion bodies with Cry34Ab1. Proteolytic processing occurs near the C-terminus yielding a stable protein of approximately 40 kDa; this may be the active form of the protein.

Its function is as follows. Component of a binary insecticidal toxin active on western corn rootworm (WCR, Diabrotica virgifera subsp. virgifera Le Conte) and probably also on northern corn rootworm (D.barberi). Both proteins are required for maximal toxicity. The larval midgut epithelium is probably the primary target. This protein alone has no activity against southern corn rootworm (Diabrotica undecimpunctata howardi Barber), but it synergizes the toxic effect of its Cry34Ab1 partner. The 2 proteins individually and together form ion channels; channels made in the presence of the 2 proteins have higher conductance. Binds to WCR third instar midgut brush border membrane vesicles; binding improves over 10-fold in the presence of Cry34Ab1. The protein is Insecticidal crystal protein Cry35Ab1 of Bacillus thuringiensis.